The chain runs to 70 residues: DNA-directed RNA polymerase subunit omega (70 aa).

This sequence belongs to the RNA polymerase subunit omega family. As to quaternary structure, the RNAP catalytic core consists of 2 alpha, 1 beta, 1 beta' and 1 omega subunit. When a sigma factor is associated with the core the holoenzyme is formed, which can initiate transcription.

The enzyme catalyses RNA(n) + a ribonucleoside 5'-triphosphate = RNA(n+1) + diphosphate. Its function is as follows. Promotes RNA polymerase assembly. Latches the N- and C-terminal regions of the beta' subunit thereby facilitating its interaction with the beta and alpha subunits. This Bacillus mycoides (strain KBAB4) (Bacillus weihenstephanensis) protein is DNA-directed RNA polymerase subunit omega.